A 236-amino-acid polypeptide reads, in one-letter code: Ribonuclease 3 (236 aa).

The RNase III domain maps to 6–140 (FLDFLKQNRI…FIGAVAQDQG (135 aa)). Glutamate 46 contributes to the Mg(2+) binding site. Aspartate 50 is a catalytic residue. Residues aspartate 126 and glutamate 129 each contribute to the Mg(2+) site. Glutamate 129 is an active-site residue. One can recognise a DRBM domain in the interval 166–231 (DYKTIFQEQA…AKNAILKLDD (66 aa)).

Belongs to the ribonuclease III family. As to quaternary structure, homodimer. The cofactor is Mg(2+).

It is found in the cytoplasm. It catalyses the reaction Endonucleolytic cleavage to 5'-phosphomonoester.. Functionally, digests double-stranded RNA. Involved in the processing of primary rRNA transcript to yield the immediate precursors to the large and small rRNAs (23S and 16S). Processes some mRNAs, and tRNAs when they are encoded in the rRNA operon. Processes pre-crRNA and tracrRNA of type II CRISPR loci if present in the organism. The chain is Ribonuclease 3 from Ureaplasma parvum serovar 3 (strain ATCC 700970).